A 176-amino-acid polypeptide reads, in one-letter code: ATP-dependent protease subunit HslV (176 aa).

Thr-5 is an active-site residue. The Na(+) site is built by Ser-161, Cys-164, and Thr-167.

Belongs to the peptidase T1B family. HslV subfamily. As to quaternary structure, a double ring-shaped homohexamer of HslV is capped on each side by a ring-shaped HslU homohexamer. The assembly of the HslU/HslV complex is dependent on binding of ATP.

It is found in the cytoplasm. It catalyses the reaction ATP-dependent cleavage of peptide bonds with broad specificity.. With respect to regulation, allosterically activated by HslU binding. Protease subunit of a proteasome-like degradation complex believed to be a general protein degrading machinery. The chain is ATP-dependent protease subunit HslV from Thermoanaerobacter sp. (strain X514).